Consider the following 302-residue polypeptide: O-antigen biosynthesis glycosyltransferase WbnK (302 aa).

It belongs to the glycosyltransferase 11 family.

The enzyme catalyses beta-D-Gal-(1-&gt;3)-alpha-D-GalNAc-(1-&gt;3)-alpha-D-GalNAc-di-trans,octa-cis-undecaprenyl diphosphate + GDP-beta-L-fucose = alpha-L-Fuc-(1-&gt;2)-beta-D-Gal-(1-&gt;3)-alpha-D-GalNAc-(1-&gt;3)-alpha-D-GalNAc-di-trans,octa-cis-undecaprenyl diphosphate + GDP + H(+). It participates in bacterial outer membrane biogenesis; LPS O-antigen biosynthesis. Involved in the assembly of the O-repeating unit during O-antigen biosynthesis. The sequence is that of O-antigen biosynthesis glycosyltransferase WbnK from Escherichia coli.